We begin with the raw amino-acid sequence, 639 residues long: DNA mismatch repair protein MutL (639 aa).

The segment at 336–392 (SAHDDPTPAISGAARDEEPRGVENRASAGENRFNRPASSPVASAPRPAHVAAPRMPA) is disordered. Residues 349–358 (ARDEEPRGVE) show a composition bias toward basic and acidic residues. The span at 370-392 (RPASSPVASAPRPAHVAAPRMPA) shows a compositional bias: low complexity.

It belongs to the DNA mismatch repair MutL/HexB family.

Its function is as follows. This protein is involved in the repair of mismatches in DNA. It is required for dam-dependent methyl-directed DNA mismatch repair. May act as a 'molecular matchmaker', a protein that promotes the formation of a stable complex between two or more DNA-binding proteins in an ATP-dependent manner without itself being part of a final effector complex. This Edwardsiella ictaluri (strain 93-146) protein is DNA mismatch repair protein MutL.